Reading from the N-terminus, the 178-residue chain is uncharacterized protein (178 aa).

The first 20 residues, 1-20 (MKKLLVASLALLILTPVALA), serve as a signal peptide directing secretion.

This is an uncharacterized protein from Archaeoglobus fulgidus (strain ATCC 49558 / DSM 4304 / JCM 9628 / NBRC 100126 / VC-16).